A 948-amino-acid polypeptide reads, in one-letter code: ELKS/Rab6-interacting/CAST family member 1 (948 aa).

The disordered stretch occupies residues 1-54 (MYGSARSVGKVEPSSQSPGRSPRLPRSPRLGHRRTNSTGGSSGNSVGGGSGKTL). Lys10 bears the N6-acetyllysine mark. Positions 13–28 (PSSQSPGRSPRLPRSP) are enriched in low complexity. 3 positions are modified to phosphoserine: Ser17, Ser21, and Ser37. Residue Thr38 is modified to Phosphothreonine. A compositionally biased stretch (gly residues) spans 40 to 51 (GSSGNSVGGGSG). Phosphoserine is present on residues Ser55, Ser75, Ser94, Ser796, and Ser937. Positions 144–920 (RQARDNTIMD…RMKLMADNYE (777 aa)) form a coiled coil. A compositionally biased stretch (basic and acidic residues) spans 773 to 796 (KHKEQVEKKKSAQMLEEARRREDS). 2 disordered regions span residues 773–801 (KHKE…SDSS) and 903–948 (QLKQ…GIWA). The segment covering 939-948 (DQDEEEGIWA) has biased composition (acidic residues).

Interacts with the GTB-bound forms of RAB6A isoform 1 and isoform 2 and with RAB6B. The interaction was strongest with RAB6B, followed by RAB6A isoform 2 and weakest with RAB6A isoform 1. Part of a complex with CHUK, IKBKB and IKBKG. Interacts with CHUK, IKBKB and IKBKG. The interaction with IKBKG is independent of CHUK and IKBKB. Interacts with NFKBIA. Isoform 1 interacts through its C-terminus with the PDZ domains of RIMS1 and RIMS2. Interacts with ERC2/CAST1. Interacts with SDCCAG8. Part of a cortical microtubule stabilization complex (CMSC) composed of KANK1, PPFIA1, PPFIBP1, ERC1/ELKS, PHLDB2/LL5beta, CLASPs, KIF21A and possibly additional interactors; within CMSCs KANK1 and PHLDB2/LL5beta appear to be the core components for targeting of microtubule-binding proteins KIF21A and CLASPs, whereas PPFIA1, PPFIBP1 and ERC1/ELKS serve as scaffolds for protein clustering. Isoform 1 is specifically expressed in brain. A further probable isoform is widely expressed outside of brain It is referred to as ERC1a by PubMed:12391317 and characterized by a C-terminus identical to that of isoforms 1 in human and mouse.

It is found in the cytoplasm. Its subcellular location is the cytoskeleton. The protein resides in the microtubule organizing center. It localises to the centrosome. The protein localises to the membrane. It is found in the golgi apparatus membrane. Its subcellular location is the presynaptic active zone. The protein resides in the cell projection. It localises to the podosome. In terms of biological role, regulatory subunit of the IKK complex. Probably recruits IkappaBalpha/NFKBIA to the complex. May be involved in the organization of the cytomatrix at the nerve terminals active zone (CAZ) which regulates neurotransmitter release. May be involved in vesicle trafficking at the CAZ. May be involved in Rab-6 regulated endosomes to Golgi transport. This is ELKS/Rab6-interacting/CAST family member 1 (Erc1) from Rattus norvegicus (Rat).